Reading from the N-terminus, the 65-residue chain is Keratin-associated protein 20-2 (65 aa).

This sequence belongs to the KRTAP type 20 family. In terms of assembly, interacts with hair keratins.

Its function is as follows. In the hair cortex, hair keratin intermediate filaments are embedded in an interfilamentous matrix, consisting of hair keratin-associated proteins (KRTAP), which are essential for the formation of a rigid and resistant hair shaft through their extensive disulfide bond cross-linking with abundant cysteine residues of hair keratins. The matrix proteins include the high-sulfur and high-glycine-tyrosine keratins. The polypeptide is Keratin-associated protein 20-2 (KRTAP20-2) (Homo sapiens (Human)).